Here is a 159-residue protein sequence, read N- to C-terminus: Urease accessory protein UreE (159 aa).

The protein belongs to the UreE family.

The protein resides in the cytoplasm. In terms of biological role, involved in urease metallocenter assembly. Binds nickel. Probably functions as a nickel donor during metallocenter assembly. The polypeptide is Urease accessory protein UreE (Vibrio parahaemolyticus).